The primary structure comprises 167 residues: uncharacterized protein (167 aa).

Residues 39 to 59 form a helical membrane-spanning segment; it reads LSLFSLSPLFLLLSISSLIFS. Residues 92–122 are a coiled coil; that stretch reads LGTQIEMITQAMTTLESRVTDLQQESNDHRT. The tract at residues 134–167 is disordered; sequence RDLGDENRPKPTTNKMIATGEQHKGEVSTSLFHD. The segment covering 154 to 167 has biased composition (basic and acidic residues); sequence EQHKGEVSTSLFHD.

It localises to the mitochondrion membrane. This is an uncharacterized protein from Arabidopsis thaliana (Mouse-ear cress).